Reading from the N-terminus, the 310-residue chain is Zinc finger protein unc-98 (310 aa).

Residues 73–84 (GSSSAQTPTKSS) show a composition bias toward polar residues. A disordered region spans residues 73 to 102 (GSSSAQTPTKSSGGALDGSDQQEVRQDGTS). 2 C2H2-type zinc fingers span residues 113–135 (YKCRFCGLTFNFMNTLRAHERIH) and 141–163 (YVCGKCGDSFEFACQLEYHAAQH). A C2H2-type 3; degenerate zinc finger spans residues 169-188 (YKCECGRTFFSYTEMLYHKH). The segment at 198–310 (APETTTIKVS…RTSGYVTPRF (113 aa)) is interaction with myo-3. The segment at 246-268 (YICEYCSKSYSDSRGLAYHMYSH) adopts a C2H2-type 4 zinc-finger fold.

As to quaternary structure, interacts with hum-6, mep-1, myo-3, unc-96 and unc-97/PINCH. As to expression, expressed in embryos from 1.5- to 2-fold stage in myofibrils. In larvae and adults, it is expressed in body wall muscle, and in addition, anal depressor muscle and vulval muscles. More specifically it is found in the thick filaments of muscle fibers.

It localises to the nucleus. It is found in the cytoplasm. Probable transcription factor required for muscle structure. Its dual subcellular localization suggests that it may function both as a muscle adhesion complex protein and as a transcription factor, or work together with transcription factors, to influence gene expression. Thought to act as a molecular bridge between unc-97 and myo-3 at the M-line of muscles, possibly in a signaling role. Plays a role in the formation of muscle connections, also called muscle arm extensions, between the body wall and the motor axons in the dorsal and ventral cord. The protein is Zinc finger protein unc-98 (unc-98) of Caenorhabditis elegans.